A 586-amino-acid chain; its full sequence is Eukaryotic translation initiation factor 3 subunit D (586 aa).

The tract at residues 102–176 (SAKRTFGRGG…DKPQRTREPS (75 aa)) is disordered. Basic and acidic residues predominate over residues 162 to 174 (GWKDYDKPQRTRE). Positions 301-315 (SLDLVTVNENAADAP) are RNA gate. Residues 567–586 (EEEEEVAAEEQEAAEEEAEE) form a disordered region.

It belongs to the eIF-3 subunit D family. As to quaternary structure, component of the eukaryotic translation initiation factor 3 (eIF-3) complex.

Its subcellular location is the cytoplasm. Its function is as follows. mRNA cap-binding component of the eukaryotic translation initiation factor 3 (eIF-3) complex, which is involved in protein synthesis of a specialized repertoire of mRNAs and, together with other initiation factors, stimulates binding of mRNA and methionyl-tRNAi to the 40S ribosome. The eIF-3 complex specifically targets and initiates translation of a subset of mRNAs involved in cell proliferation. In the eIF-3 complex, eif3d specifically recognizes and binds the 7-methylguanosine cap of a subset of mRNAs. This Aspergillus niger (strain ATCC MYA-4892 / CBS 513.88 / FGSC A1513) protein is Eukaryotic translation initiation factor 3 subunit D.